A 106-amino-acid chain; its full sequence is Thiosulfate sulfurtransferase GlpE (106 aa).

The region spanning glutamine 17–threonine 105 is the Rhodanese domain. Cysteine 65 acts as the Cysteine persulfide intermediate in catalysis.

This sequence belongs to the GlpE family.

The protein localises to the cytoplasm. The enzyme catalyses thiosulfate + hydrogen cyanide = thiocyanate + sulfite + 2 H(+). It catalyses the reaction thiosulfate + [thioredoxin]-dithiol = [thioredoxin]-disulfide + hydrogen sulfide + sulfite + 2 H(+). Its function is as follows. Transferase that catalyzes the transfer of sulfur from thiosulfate to thiophilic acceptors such as cyanide or dithiols. May function in a CysM-independent thiosulfate assimilation pathway by catalyzing the conversion of thiosulfate to sulfite, which can then be used for L-cysteine biosynthesis. The protein is Thiosulfate sulfurtransferase GlpE of Tolumonas auensis (strain DSM 9187 / NBRC 110442 / TA 4).